Consider the following 248-residue polypeptide: 3-deoxy-manno-octulosonate cytidylyltransferase (248 aa).

It belongs to the KdsB family.

Its subcellular location is the cytoplasm. It catalyses the reaction 3-deoxy-alpha-D-manno-oct-2-ulosonate + CTP = CMP-3-deoxy-beta-D-manno-octulosonate + diphosphate. It participates in nucleotide-sugar biosynthesis; CMP-3-deoxy-D-manno-octulosonate biosynthesis; CMP-3-deoxy-D-manno-octulosonate from 3-deoxy-D-manno-octulosonate and CTP: step 1/1. The protein operates within bacterial outer membrane biogenesis; lipopolysaccharide biosynthesis. Functionally, activates KDO (a required 8-carbon sugar) for incorporation into bacterial lipopolysaccharide in Gram-negative bacteria. The chain is 3-deoxy-manno-octulosonate cytidylyltransferase from Escherichia coli O139:H28 (strain E24377A / ETEC).